We begin with the raw amino-acid sequence, 193 residues long: dCTP deaminase (193 aa).

Residues 110 to 115, Asp-128, 136 to 138, Tyr-171, Lys-178, and Gln-182 each bind dCTP; these read RSSLAR and VLE. Glu-138 functions as the Proton donor/acceptor in the catalytic mechanism. The disordered stretch occupies residues 173 to 193; sequence KRKNAKYKDQQDAVASRISQD.

It belongs to the dCTP deaminase family. In terms of assembly, homotrimer.

The catalysed reaction is dCTP + H2O + H(+) = dUTP + NH4(+). The protein operates within pyrimidine metabolism; dUMP biosynthesis; dUMP from dCTP (dUTP route): step 1/2. Functionally, catalyzes the deamination of dCTP to dUTP. The protein is dCTP deaminase of Shewanella sp. (strain ANA-3).